Here is a 959-residue protein sequence, read N- to C-terminus: MMS19 nucleotide excision repair protein (959 aa).

HEAT repeat units follow at residues 794–828 (QKLF…ATPQ), 832–871 (KLNI…QQDT), 874–915 (QGHL…YPTF), and 918–956 (LPHK…VGAP).

The protein belongs to the MET18/MMS19 family. In terms of assembly, component of the CIA complex. Interacts with Xpd and galla-2. Binds to microtubules. In terms of tissue distribution, expressed in embryos (at protein level).

It localises to the cytoplasm. It is found in the cytoskeleton. The protein resides in the spindle. Its subcellular location is the nucleus. The protein localises to the midbody. Functionally, key component of the cytosolic iron-sulfur protein assembly (CIA) complex, a multiprotein complex that mediates the incorporation of iron-sulfur cluster into apoproteins specifically involved in DNA metabolism and genomic integrity. In the CIA complex, MMS19 acts as an adapter between early-acting CIA components and a subset of cellular target iron-sulfur proteins. Essential for diploid cell cycles, organ growth and development. Regulates mitosis by binding to Xpd and thereby competing with the Xpd-mediated repression on the Cdk-activating kinase (CAK) complex. Regulates the centrosomal localization of the MT regulator tacc, a downstream target of aurA kinase. Binds to microtubules (MT). Regulates spindle and astral MT growth, MT stability and bundling. In neuroblasts, necessary for timely and coordinated spindle assembly and orientation which is necessary for mitotic progression. In young embryos, the maternal protein is important for progression through mitosis. The sequence is that of MMS19 nucleotide excision repair protein from Drosophila melanogaster (Fruit fly).